The following is a 347-amino-acid chain: Probable magnetosome protein Mms36 (347 aa).

The helical transmembrane segment at 25–45 (VLVLYLAIAVVVAVLAWPWLA) threads the bilayer.

It localises to the magnetosome membrane. Functionally, the 4 genes of this operon collectively influence magnetosome size and number. The polypeptide is Probable magnetosome protein Mms36 (Magnetospirillum gryphiswaldense (strain DSM 6361 / JCM 21280 / NBRC 15271 / MSR-1)).